Here is a 734-residue protein sequence, read N- to C-terminus: Photosystem I P700 chlorophyll a apoprotein A2 (734 aa).

The next 8 helical transmembrane spans lie at 46 to 69 (IFAS…FHVA), 135 to 158 (LYTG…LHLQ), 175 to 199 (LNHH…HVAI), 273 to 291 (IAHH…GHMY), 330 to 353 (IHFQ…QHMY), 369 to 395 (AALY…IFFI), 417 to 439 (AIIS…LYVH), and 517 to 535 (FLVH…LILV). [4Fe-4S] cluster contacts are provided by cysteine 559 and cysteine 568. The next 2 membrane-spanning stretches (helical) occupy residues 575–596 (AFYL…YWHW) and 643–665 (LSVW…MFLI). The chlorophyll a site is built by histidine 654, methionine 662, and tyrosine 670. Phylloquinone is bound at residue tryptophan 671. The helical transmembrane segment at 707 to 727 (LVGLAHFSVGYIFTYAAFLIA) threads the bilayer.

It belongs to the PsaA/PsaB family. In terms of assembly, the PsaA/B heterodimer binds the P700 chlorophyll special pair and subsequent electron acceptors. PSI consists of a core antenna complex that captures photons, and an electron transfer chain that converts photonic excitation into a charge separation. The eukaryotic PSI reaction center is composed of at least 11 subunits. It depends on P700 is a chlorophyll a/chlorophyll a' dimer, A0 is one or more chlorophyll a, A1 is one or both phylloquinones and FX is a shared 4Fe-4S iron-sulfur center. as a cofactor.

The protein resides in the plastid. The protein localises to the chloroplast thylakoid membrane. It carries out the reaction reduced [plastocyanin] + hnu + oxidized [2Fe-2S]-[ferredoxin] = oxidized [plastocyanin] + reduced [2Fe-2S]-[ferredoxin]. Its function is as follows. PsaA and PsaB bind P700, the primary electron donor of photosystem I (PSI), as well as the electron acceptors A0, A1 and FX. PSI is a plastocyanin-ferredoxin oxidoreductase, converting photonic excitation into a charge separation, which transfers an electron from the donor P700 chlorophyll pair to the spectroscopically characterized acceptors A0, A1, FX, FA and FB in turn. Oxidized P700 is reduced on the lumenal side of the thylakoid membrane by plastocyanin. The protein is Photosystem I P700 chlorophyll a apoprotein A2 of Eucalyptus globulus subsp. globulus (Tasmanian blue gum).